The primary structure comprises 564 residues: MRLSQFHLHTTKETPADAELVSHRLMLRAGMIRKLASGLYTWSPLGLRVLRKVEAIVREEMNRAGAVEVLFPTIQPRELWDATGRWEKFGGQLLKIKDRKEQEFCYTPTAEEAAAEFARQEINSYKQLPLNFYQIQTKFRDEIRPRFGVMRAREFLMKDAYSFHLTDADMAREYDNMRAAYIRIFTRLGLEFRAVQADSGAIGGDASQEFHVIAESGEDSLAFSTGSDYAANVETASAALPAPRPAAGETLQRVDTPTQKTCEDVAQLLGLPLQRTVKSIAVMTTAGFVLVLVRGDHAVNELKLAKVAGMADYRLANESEIRQHLGSEPGFLGPVQPAQPIRIIADRDVAAMADFVVGANAVGVHLTGVNWGRDLPEPETVADVRNVVDGDRASDGGELRLTRGIEVGHVFQLGSKYAEALQATVLDENGKAAVMKMGCYGIGISRIVAAAIEQNHDDAGIVWPAPMAPWKVVVCVINPKQDAQVAAAAGDLLEELIAAGIDAALDDRGLRPGAMFADMELLGVPHRVVVSERGLAAGTFEYRARTAESAENLDKAGLFSRLGN.

Belongs to the class-II aminoacyl-tRNA synthetase family. ProS type 1 subfamily. As to quaternary structure, homodimer.

The protein localises to the cytoplasm. The catalysed reaction is tRNA(Pro) + L-proline + ATP = L-prolyl-tRNA(Pro) + AMP + diphosphate. In terms of biological role, catalyzes the attachment of proline to tRNA(Pro) in a two-step reaction: proline is first activated by ATP to form Pro-AMP and then transferred to the acceptor end of tRNA(Pro). As ProRS can inadvertently accommodate and process non-cognate amino acids such as alanine and cysteine, to avoid such errors it has two additional distinct editing activities against alanine. One activity is designated as 'pretransfer' editing and involves the tRNA(Pro)-independent hydrolysis of activated Ala-AMP. The other activity is designated 'posttransfer' editing and involves deacylation of mischarged Ala-tRNA(Pro). The misacylated Cys-tRNA(Pro) is not edited by ProRS. In Xanthomonas campestris pv. campestris (strain 8004), this protein is Proline--tRNA ligase.